Consider the following 284-residue polypeptide: Cell division protein ZipA (284 aa).

Methionine 1 is a topological domain (periplasmic). The helical transmembrane segment at 2 to 22 (EIGLREWLIVIGIIVIAGILF) threads the bilayer. Over 23-284 (DGWRRMRGGK…FERRALTQKR (262 aa)) the chain is Cytoplasmic. Residues 47-140 (PDDEGSAELL…SASHSDKDQP (94 aa)) form a disordered region. Composition is skewed to basic and acidic residues over residues 62–75 (LDTH…EHDL), 83–102 (REPR…EPHQ), and 119–140 (SRDD…KDQP).

The protein belongs to the ZipA family. Interacts with FtsZ via their C-terminal domains.

It localises to the cell inner membrane. Functionally, essential cell division protein that stabilizes the FtsZ protofilaments by cross-linking them and that serves as a cytoplasmic membrane anchor for the Z ring. Also required for the recruitment to the septal ring of downstream cell division proteins. The chain is Cell division protein ZipA from Pseudomonas fluorescens (strain ATCC BAA-477 / NRRL B-23932 / Pf-5).